Consider the following 309-residue polypeptide: tRNA uridine(34) hydroxylase (309 aa).

The Rhodanese domain occupies 130–224 (SDPDTIVIDT…YLEEVPQEES (95 aa)). The Cysteine persulfide intermediate role is filled by Cys184.

It belongs to the TrhO family.

The catalysed reaction is uridine(34) in tRNA + AH2 + O2 = 5-hydroxyuridine(34) in tRNA + A + H2O. Catalyzes oxygen-dependent 5-hydroxyuridine (ho5U) modification at position 34 in tRNAs. The protein is tRNA uridine(34) hydroxylase of Rhizobium leguminosarum bv. trifolii (strain WSM2304).